The primary structure comprises 397 residues: Elongation factor Tu (397 aa).

The tr-type G domain occupies lysine 10–valine 207. The segment at glycine 19 to threonine 26 is G1. Glycine 19–threonine 26 serves as a coordination point for GTP. Threonine 26 contacts Mg(2+). The G2 stretch occupies residues glycine 63–asparagine 67. The G3 stretch occupies residues aspartate 84–glycine 87. GTP-binding positions include aspartate 84 to histidine 88 and asparagine 139 to aspartate 142. The segment at asparagine 139–aspartate 142 is G4. Positions serine 177 to leucine 179 are G5.

The protein belongs to the TRAFAC class translation factor GTPase superfamily. Classic translation factor GTPase family. EF-Tu/EF-1A subfamily. Monomer.

It localises to the cytoplasm. It carries out the reaction GTP + H2O = GDP + phosphate + H(+). Its function is as follows. GTP hydrolase that promotes the GTP-dependent binding of aminoacyl-tRNA to the A-site of ribosomes during protein biosynthesis. The protein is Elongation factor Tu of Clavibacter michiganensis subsp. michiganensis (strain NCPPB 382).